Here is a 428-residue protein sequence, read N- to C-terminus: Cytokine-dependent hematopoietic cell linker (428 aa).

The tract at residues 1–22 is disordered; sequence MNRQGNRKTTKEGSNDLKFQNF. Y69 and Y96 each carry phosphotyrosine; by LYN. 2 disordered regions span residues 135–198 and 244–271; these read DKPI…EVQR and SSSF…PQRC. The interval 159–164 is mediates interaction with PLCG1; essential for BCR signaling; involved in restoration of BCR-induced calcium response and ERK2 and JNK2 activation in BLNK-deficient cells expressing LAT; the sequence is PLPPPR. The tract at residues 178-180 is mediates interaction with LAT, GRB2, and FGR; involved in translocation to the glycolipid-enriched microdomain and restoration of BCR-induced calcium response in BLNK-deficient DT40 cells expressing LAT; it reads PEP. Over residues 244–253 the composition is skewed to low complexity; it reads SSSFTTSNHS. Residues 309 to 419 enclose the SH2 domain; that stretch reads WYIGEYSRQA…RKQCHLTQPL (111 aa).

When phosphorylated, interacts with PLCG1, PLCG2, GRB2, VAV and LAT. Interacts with LBR and AGO2. Interacts with FGR. Part of a complex consisting of CLNK, SKAP1 and FYB1. Interacts (via SH2 domain) with FYB1; this interaction allows SKAP1 and FYB1 to promote tyrosine phosphorylation of CLNK by LYN. Interacts (via SH2 domain) with MAP4K1. Tyrosine-phosphorylated upon BCR cross-linking. Tyrosine phosphorylation at both Tyr-69 and Tyr-96 are required for BCR-induced calcium response and are essential to restore PLCG2-mediated signaling in BLNK-deficient DT40 cells, but this phosphorylation is dispensable in cells expressing LAT. Interacts with the SH2 domain of PLCG1 via phosphorylated Tyr-96. Tyrosine phosphorylation is increased when complexed with SKAP1 and FYB1.

It is found in the cytoplasm. In terms of biological role, an adapter protein which plays a role in the regulation of immunoreceptor signaling, including PLC-gamma-mediated B-cell antigen receptor (BCR) signaling and FC-epsilon R1-mediated mast cell degranulation. Together with FGR, it acts as a negative regulator of natural killer cell-activating receptors and inhibits interferon-gamma production. Acts as a positive regulator of both T-cell receptor and natural killer T (NKT) cell receptor signaling in CD4-positive NKT cells. Together with MAP4K1, it enhances CD3-triggered activation of T-cells and subsequent IL2 production. May be involved in tumor necrosis factor induced cell death by promoting reactive oxidative species generation, and MLKL oligomerization, ultimately leading to necrosis. Involved in phosphorylation of LAT. May be involved in high affinity immunoglobulin epsilon receptor signaling in mast cells. In Homo sapiens (Human), this protein is Cytokine-dependent hematopoietic cell linker (CLNK).